A 142-amino-acid chain; its full sequence is MKTFVAKPETVKRDWYVVDATGKTLGRLATELARRLRGKHKAEYTPHVDTGDYIIVINADKVAVTGRKETDKVYYWHTGYVGGIKQATFKEMIARRPEAVIEIAVKGMLPKGPLGRAMFRKLKVYAGAQHEHTAQQPQVLDI.

Belongs to the universal ribosomal protein uL13 family. As to quaternary structure, part of the 50S ribosomal subunit.

Its function is as follows. This protein is one of the early assembly proteins of the 50S ribosomal subunit, although it is not seen to bind rRNA by itself. It is important during the early stages of 50S assembly. The chain is Large ribosomal subunit protein uL13 from Actinobacillus succinogenes (strain ATCC 55618 / DSM 22257 / CCUG 43843 / 130Z).